A 1158-amino-acid polypeptide reads, in one-letter code: Phospholipid-transporting ATPase 1 (1158 aa).

Residues 1–15 (MDPRKSIDKPPHHDP) show a composition bias toward basic and acidic residues. The disordered stretch occupies residues 1–30 (MDPRKSIDKPPHHDPILGVSSRWSVSSKDN). Residues 1 to 100 (MDPRKSIDKP…TAKYSVFTFL (100 aa)) are Cytoplasmic-facing. A helical transmembrane segment spans residues 101–122 (PRNLFEQFHRVAYIYFLVIAVL). Residues 123 to 127 (NQLPQ) lie on the Extracellular side of the membrane. The helical transmembrane segment at 128 to 150 (LAVFGRGASIMPLAFVLLVSAIK) threads the bilayer. Residues 151–329 (DAYEDFRRHR…SRLETRMNLE (179 aa)) are Cytoplasmic-facing. The chain crosses the membrane as a helical span at residues 330–351 (IILLSLFLIVLCTIAAATAAVW). Residues 352-391 (LRTHRDDLDTILFYRRKDYSERPGGKNYKYYGWGWEIFFT) are Extracellular-facing. Residues 392–409 (FFMAVIVYQIMIPISLYI) form a helical membrane-spanning segment. Residues 410–914 (SMELVRIGQA…HGHWNYQRMG (505 aa)) lie on the Cytoplasmic side of the membrane. Aspartate 457 functions as the 4-aspartylphosphate intermediate in the catalytic mechanism. Mg(2+) is bound by residues aspartate 859 and aspartate 863. Residues 915 to 934 (YMILYNFYRNAVFVLILFWY) form a helical membrane-spanning segment. The Extracellular portion of the chain corresponds to 935–948 (VLFTCYTLTTAITE). Residues 949–968 (WSSVLYSVIYTAIPTIIIGI) traverse the membrane as a helical segment. The Cytoplasmic segment spans residues 969-998 (LDKDLGRQTLLDHPQLYGVGQRAEGYSTTL). Residues 999-1020 (FWYTMIDTIWQSAAIFFIPMFA) traverse the membrane as a helical segment. Topologically, residues 1021–1027 (YWGSTID) are extracellular. The chain crosses the membrane as a helical span at residues 1028–1050 (TSSLGDLWTIAAVVVVNLHLAMD). Residues 1051–1056 (VIRWNW) lie on the Cytoplasmic side of the membrane. Residues 1057 to 1077 (ITHAAIWGSIVAACICVIVID) form a helical membrane-spanning segment. Over 1078 to 1090 (VIPTLPGYWAIFQ) the chain is Extracellular. A helical transmembrane segment spans residues 1091-1115 (VGKTWMFWFCLLAIVVTSLLPRFAI). Residues 1116–1158 (KFLVEYYRPSDVRIAREAEKLGTFRESQPVGVEMNLIQDPPRR) are Cytoplasmic-facing.

Belongs to the cation transport ATPase (P-type) (TC 3.A.3) family. Type IV subfamily. Expressed in roots, flowers, anthers, leaves, vascular tissues and stems.

The protein localises to the endoplasmic reticulum membrane. The protein resides in the cell membrane. The catalysed reaction is ATP + H2O + phospholipidSide 1 = ADP + phosphate + phospholipidSide 2.. In terms of biological role, involved in transport of phospholipids. Contributes to transmembrane flipping of lipids. Has activity with phosphatidylserine and with a much lower efficiency with phosphatidylethanolamine, but not with phosphatidylcholine. The sequence is that of Phospholipid-transporting ATPase 1 from Arabidopsis thaliana (Mouse-ear cress).